A 203-amino-acid chain; its full sequence is Small ribosomal subunit protein uS4 (203 aa).

Residues 93–154 (RRFDNVVFRA…KSKNMDAVTE (62 aa)) enclose the S4 RNA-binding domain.

The protein belongs to the universal ribosomal protein uS4 family. Part of the 30S ribosomal subunit. Contacts protein S5. The interaction surface between S4 and S5 is involved in control of translational fidelity.

Its function is as follows. One of the primary rRNA binding proteins, it binds directly to 16S rRNA where it nucleates assembly of the body of the 30S subunit. In terms of biological role, with S5 and S12 plays an important role in translational accuracy. This chain is Small ribosomal subunit protein uS4, found in Prosthecochloris aestuarii (strain DSM 271 / SK 413).